Reading from the N-terminus, the 368-residue chain is sn-1 linoleoyl-lipid 6-desaturase (368 aa).

Transmembrane regions (helical) follow at residues 47 to 67 (IILA…DVLW) and 68 to 88 (MKLL…FNIS). Residues 89–93 (HDGNH) carry the Histidine box-1 motif. A Histidine box-2 motif is present at residues 124–129 (HNVLHH). The next 3 membrane-spanning stretches (helical) occupy residues 164–184 (WFIW…DVQT), 204–224 (IATL…IPIA), and 233–253 (VIGA…VFML). Residues 305-309 (HHLFP) carry the Histidine box-3 motif.

The protein belongs to the fatty acid desaturase type 2 family. Fe(2+) is required as a cofactor.

The protein localises to the cell inner membrane. The protein resides in the cellular thylakoid membrane. It catalyses the reaction a 1-[(9Z,12Z)-octadecdienoyl]-2-acyl-glycerolipid + 2 reduced [2Fe-2S]-[ferredoxin] + O2 + 2 H(+) = a 1-[(6Z,9Z,12Z)-octadectrienoyl]-2-acyl-glycerolipid + 2 oxidized [2Fe-2S]-[ferredoxin] + 2 H2O. Its pathway is lipid metabolism; polyunsaturated fatty acid biosynthesis. Activity requires ferredoxin, which is the natural electron donor, or cytochrome b5. In addition, activity is increased in the presence of the intermediate electron donors, NADPH and FADH(2). Functionally, desaturase involved in fatty acid biosynthesis. Introduces a double bond at carbon 6 of linoleoyl group (18:2) attached to the sn-1 position of the glycerol moiety of membrane glycerolipids, leading to the formation of gamma-linolenic acid (GLA). In Arthrospira platensis (Spirulina platensis), this protein is sn-1 linoleoyl-lipid 6-desaturase.